We begin with the raw amino-acid sequence, 119 residues long: Immunoglobulin heavy variable 2-70 (119 aa).

The first 19 residues, 1–19, serve as a signal peptide directing secretion; it reads MDILCSTLLLLTVPSWVLS. A Pyrrolidone carboxylic acid modification is found at Q20. The interval 20–44 is framework-1; sequence QVTLRESGPALVKPTQTLTLTCTFS. The 100-residue stretch at 20–119 folds into the Ig-like domain; sequence QVTLRESGPA…DTATYYCARI (100 aa). A disulfide bond links C41 and C116. Positions 45–54 are complementarity-determining-1; it reads GFSLSTSGMC. Residues 55-71 are framework-2; sequence VSWIRQPPGKALEWLAL. Residues 72–78 form a complementarity-determining-2 region; sequence IDWDDDK. The interval 79-116 is framework-3; it reads YYSTSLKTRLTISKDTSKNQVVLTMTNMDPVDTATYYC. A complementarity-determining-3 region spans residues 117–119; the sequence is ARI.

As to quaternary structure, immunoglobulins are composed of two identical heavy chains and two identical light chains; disulfide-linked.

The protein localises to the secreted. It is found in the cell membrane. In terms of biological role, v region of the variable domain of immunoglobulin heavy chains that participates in the antigen recognition. Immunoglobulins, also known as antibodies, are membrane-bound or secreted glycoproteins produced by B lymphocytes. In the recognition phase of humoral immunity, the membrane-bound immunoglobulins serve as receptors which, upon binding of a specific antigen, trigger the clonal expansion and differentiation of B lymphocytes into immunoglobulins-secreting plasma cells. Secreted immunoglobulins mediate the effector phase of humoral immunity, which results in the elimination of bound antigens. The antigen binding site is formed by the variable domain of one heavy chain, together with that of its associated light chain. Thus, each immunoglobulin has two antigen binding sites with remarkable affinity for a particular antigen. The variable domains are assembled by a process called V-(D)-J rearrangement and can then be subjected to somatic hypermutations which, after exposure to antigen and selection, allow affinity maturation for a particular antigen. The polypeptide is Immunoglobulin heavy variable 2-70 (Homo sapiens (Human)).